Consider the following 995-residue polypeptide: UPF0182 protein NFA_45260 (995 aa).

7 consecutive transmembrane segments (helical) span residues 18–38 (VLLV…RFTD), 63–83 (IILF…ALLL), 115–135 (FGIG…QSNW), 176–196 (FVAV…FGGL), 211–231 (IQLA…YWFD), 260–280 (KLIL…GVVL), and 288–308 (MAAA…PLVV). The interval 904-957 (ATPFGGDPATRPQPGTAPPVVDSTQPPADGGTPQPQTTPPPTGSAAKDAAAAEL) is disordered. Composition is skewed to low complexity over residues 927–938 (TQPPADGGTPQP) and 946–955 (GSAAKDAAAA).

Belongs to the UPF0182 family.

The protein resides in the cell membrane. The polypeptide is UPF0182 protein NFA_45260 (Nocardia farcinica (strain IFM 10152)).